The primary structure comprises 233 residues: Large ribosomal subunit protein uL1 (233 aa).

Belongs to the universal ribosomal protein uL1 family. As to quaternary structure, part of the 50S ribosomal subunit.

Functionally, binds directly to 23S rRNA. The L1 stalk is quite mobile in the ribosome, and is involved in E site tRNA release. In terms of biological role, protein L1 is also a translational repressor protein, it controls the translation of the L11 operon by binding to its mRNA. In Photorhabdus laumondii subsp. laumondii (strain DSM 15139 / CIP 105565 / TT01) (Photorhabdus luminescens subsp. laumondii), this protein is Large ribosomal subunit protein uL1.